An 809-amino-acid chain; its full sequence is Interleukin-4 receptor subunit alpha (809 aa).

An N-terminal signal peptide occupies residues 1 to 25 (MGCLCPGLTLPVSCLILVWAAGSGS). At 26 to 231 (VKVLRLTACF…NYYEQPLEQR (206 aa)) the chain is on the extracellular side. C34 and C44 are oxidised to a cystine. N-linked (GlcNAc...) asparagine glycans are attached at residues N53 and N71. C74 and C86 are disulfide-bonded. 3 N-linked (GlcNAc...) asparagine glycosylation sites follow: N112, N128, and N161. Positions 125–222 (APQNLTVHAI…EWSPSTTWHN (98 aa)) constitute a Fibronectin type-III domain. Phosphoserine is present on S163. 2 N-linked (GlcNAc...) asparagine glycosylation sites follow: N175 and N208. The WSXWS motif signature appears at 211-215 (WSEWS). The chain crosses the membrane as a helical span at residues 232-255 (LPLGVSISCVVILAICLSCYFSII). Over 256–809 (KIKKEWWDQI…STGPTCTSAS (554 aa)) the chain is Cytoplasmic. Residues 261 to 269 (WWDQIPNPA) carry the Box 1 motif motif. 2 disordered regions span residues 369-397 (ESEE…QEGR) and 441-468 (SAGP…TLTQ). The span at 447–468 (AASQGEEQPLNPESNPLATLTQ) shows a compositional bias: polar residues. Y488 carries the phosphotyrosine modification. The disordered stretch occupies residues 514–536 (LGQVDPSIPSAPQPSEPPTALQP). Y566, Y590, and Y618 each carry phosphotyrosine. The tract at residues 606–674 (QSGVEASSGE…EPTVKGEDPR (69 aa)) is disordered. Positions 695–700 (IVYSAL) match the ITIM motif motif.

The protein belongs to the type I cytokine receptor family. Type 4 subfamily. In terms of assembly, the functional IL4 receptor is formed by initial binding of IL4 to IL4R. Subsequent recruitment to the complex of the common gamma chain, in immune cells, creates a type I receptor and, in non-immune cells, of IL13RA1 forms a type II receptor. IL4R can also interact with the IL13/IL13RA1 complex to form a similar type II receptor. Interacts with PIK3C3. Interacts with the SH2-containing phosphatases, PTPN6/SHIP1, PTPN11/SHIP2 and INPP5D/SHIP. Interacts with JAK1 through a Box 1-containing region; inhibited by SOCS5. Interacts with SOCS5; inhibits IL4 signaling. Interacts with JAK3. Interacts with CLM1. Interacts with IL13RA2. Post-translationally, on IL4 binding, phosphorylated on tyrosine residues in the cytoplasmic domain.

It localises to the cell membrane. It is found in the secreted. Functionally, receptor for both interleukin 4 and interleukin 13. Couples to the JAK1/2/3-STAT6 pathway. The IL4 response is involved in promoting Th2 differentiation. The IL4/IL13 responses are involved in regulating IgE production and, chemokine and mucus production at sites of allergic inflammation. In certain cell types, can signal through activation of insulin receptor substrates, IRS1/IRS2. The polypeptide is Interleukin-4 receptor subunit alpha (IL4R) (Equus caballus (Horse)).